We begin with the raw amino-acid sequence, 44 residues long: MMVHFRFPFPGGEFPVSAQPEFELVARLHAAVVREEDVWQKRTP.

This is an uncharacterized protein from Treponema pallidum (strain Nichols).